The chain runs to 48 residues: Small polypeptide DEVIL 19 (48 aa).

A required for DVL/RTFL small polypeptide activity region spans residues Ala-13–Ile-44. A helical membrane pass occupies residues Gln-25–Trp-42.

It belongs to the DVL/RTFL small polypeptides family.

The protein resides in the cell membrane. Functionally, small polypeptide acting as a regulatory molecule which coordinates cellular responses required for differentiation, growth and development, probably by restricting polar cell proliferation in lateral organs and coordinating socket cell recruitment and differentiation at trichome sites. This chain is Small polypeptide DEVIL 19, found in Arabidopsis thaliana (Mouse-ear cress).